The primary structure comprises 414 residues: Na(+)-translocating NADH-quinone reductase subunit B (414 aa).

The next 4 helical transmembrane spans lie at 23 to 40, 56 to 76, 129 to 149, and 164 to 184; these read WFALYEAAATLFYTPGLV, IMIMVWFAVFPAMFWGMYNAG, FLPIYATVFLVGGFWEVLFCM, and ILFALIVPPTLPLWQAALGIT. Thr-236 is subject to FMN phosphoryl threonine. Helical transmembrane passes span 268–288, 297–317, 322–342, 358–378, and 381–401; these read IPGSIGEVSTLALLIGAAMIV, IIAGVMIGMIVVSTLFNVIGS, MFSMPWHWHLVLGGFAFGMFF, WWYGILIGAMCVMIRVVNPAY, and GMMLAILFANLFAPLFDHLVV.

The protein belongs to the NqrB/RnfD family. In terms of assembly, composed of six subunits; NqrA, NqrB, NqrC, NqrD, NqrE and NqrF. The cofactor is FMN.

It localises to the cell inner membrane. It carries out the reaction a ubiquinone + n Na(+)(in) + NADH + H(+) = a ubiquinol + n Na(+)(out) + NAD(+). Its function is as follows. NQR complex catalyzes the reduction of ubiquinone-1 to ubiquinol by two successive reactions, coupled with the transport of Na(+) ions from the cytoplasm to the periplasm. NqrA to NqrE are probably involved in the second step, the conversion of ubisemiquinone to ubiquinol. The polypeptide is Na(+)-translocating NADH-quinone reductase subunit B (Vibrio vulnificus (strain CMCP6)).